The following is a 249-amino-acid chain: 2,3-bisphosphoglycerate-dependent phosphoglycerate mutase (249 aa).

Residues 10 to 17, 23 to 24, Arg62, 89 to 92, Lys100, 116 to 117, and 185 to 186 each bind substrate; these read RHGESEWN, TG, ERHY, RR, and GN. The active-site Tele-phosphohistidine intermediate is the His11. Glu89 (proton donor/acceptor) is an active-site residue.

It belongs to the phosphoglycerate mutase family. BPG-dependent PGAM subfamily. As to quaternary structure, homodimer.

The catalysed reaction is (2R)-2-phosphoglycerate = (2R)-3-phosphoglycerate. It participates in carbohydrate degradation; glycolysis; pyruvate from D-glyceraldehyde 3-phosphate: step 3/5. Its function is as follows. Catalyzes the interconversion of 2-phosphoglycerate and 3-phosphoglycerate. In Hamiltonella defensa subsp. Acyrthosiphon pisum (strain 5AT), this protein is 2,3-bisphosphoglycerate-dependent phosphoglycerate mutase.